We begin with the raw amino-acid sequence, 148 residues long: SsrA-binding protein (148 aa).

The tract at residues A119–R148 is disordered. The segment covering K127–R142 has biased composition (basic and acidic residues).

This sequence belongs to the SmpB family.

The protein localises to the cytoplasm. Required for rescue of stalled ribosomes mediated by trans-translation. Binds to transfer-messenger RNA (tmRNA), required for stable association of tmRNA with ribosomes. tmRNA and SmpB together mimic tRNA shape, replacing the anticodon stem-loop with SmpB. tmRNA is encoded by the ssrA gene; the 2 termini fold to resemble tRNA(Ala) and it encodes a 'tag peptide', a short internal open reading frame. During trans-translation Ala-aminoacylated tmRNA acts like a tRNA, entering the A-site of stalled ribosomes, displacing the stalled mRNA. The ribosome then switches to translate the ORF on the tmRNA; the nascent peptide is terminated with the 'tag peptide' encoded by the tmRNA and targeted for degradation. The ribosome is freed to recommence translation, which seems to be the essential function of trans-translation. The sequence is that of SsrA-binding protein from Neisseria gonorrhoeae (strain ATCC 700825 / FA 1090).